The sequence spans 136 residues: Large ribosomal subunit protein uL16 (136 aa).

The protein belongs to the universal ribosomal protein uL16 family. As to quaternary structure, part of the 50S ribosomal subunit.

Binds 23S rRNA and is also seen to make contacts with the A and possibly P site tRNAs. The protein is Large ribosomal subunit protein uL16 of Proteus mirabilis (strain HI4320).